The following is a 509-amino-acid chain: Kynureninase 1 (509 aa).

Pyridoxal 5'-phosphate-binding positions include L169, T170, 197–200 (FPSD), D283, H286, and Y308. The residue at position 309 (K309) is an N6-(pyridoxal phosphate)lysine. Residues W349 and N377 each contribute to the pyridoxal 5'-phosphate site.

Belongs to the kynureninase family. Homodimer. Requires pyridoxal 5'-phosphate as cofactor.

The protein localises to the cytoplasm. The catalysed reaction is L-kynurenine + H2O = anthranilate + L-alanine + H(+). It carries out the reaction 3-hydroxy-L-kynurenine + H2O = 3-hydroxyanthranilate + L-alanine + H(+). It functions in the pathway amino-acid degradation; L-kynurenine degradation; L-alanine and anthranilate from L-kynurenine: step 1/1. Its pathway is cofactor biosynthesis; NAD(+) biosynthesis; quinolinate from L-kynurenine: step 2/3. Functionally, catalyzes the cleavage of L-kynurenine (L-Kyn) and L-3-hydroxykynurenine (L-3OHKyn) into anthranilic acid (AA) and 3-hydroxyanthranilic acid (3-OHAA), respectively. This is Kynureninase 1 (bna5-1) from Aspergillus fumigatus (strain CBS 144.89 / FGSC A1163 / CEA10) (Neosartorya fumigata).